The following is a 307-amino-acid chain: Myeloid-associated differentiation marker-like protein 2 (307 aa).

MARVEL domains are found at residues 17–154 (AVTS…ARPG) and 159–303 (YMAT…RIRF). A run of 7 helical transmembrane segments spans residues 53 to 73 (FCMAAWGFCFAVSALVVACEF), 90 to 110 (AFAMLATLLCATAAVLYPLYF), 129 to 149 (LAASVFAGLLFLAYAVEVALT), 163 to 183 (VSGLLKIVQAFVACIIFGALV), 198 to 218 (VAVYSLCFLATVAVVALSVMG), 229 to 249 (RLVVVYTFLAVLLYLSAAVIW), and 278 to 298 (LVVAIFTYVNLLLYVVDLAYS).

Belongs to the MAL family.

It is found in the membrane. The sequence is that of Myeloid-associated differentiation marker-like protein 2 (MYADML2) from Homo sapiens (Human).